The primary structure comprises 262 residues: Hydroxyethylthiazole kinase (262 aa).

Met50 provides a ligand contact to substrate. ATP contacts are provided by Arg125 and Thr171. Position 198 (Gly198) interacts with substrate.

The protein belongs to the Thz kinase family. It depends on Mg(2+) as a cofactor.

It carries out the reaction 5-(2-hydroxyethyl)-4-methylthiazole + ATP = 4-methyl-5-(2-phosphooxyethyl)-thiazole + ADP + H(+). It functions in the pathway cofactor biosynthesis; thiamine diphosphate biosynthesis; 4-methyl-5-(2-phosphoethyl)-thiazole from 5-(2-hydroxyethyl)-4-methylthiazole: step 1/1. In terms of biological role, catalyzes the phosphorylation of the hydroxyl group of 4-methyl-5-beta-hydroxyethylthiazole (THZ). This is Hydroxyethylthiazole kinase from Escherichia coli O7:K1 (strain IAI39 / ExPEC).